A 354-amino-acid chain; its full sequence is Peptide chain release factor 1 (354 aa).

Glutamine 231 is subject to N5-methylglutamine.

This sequence belongs to the prokaryotic/mitochondrial release factor family. In terms of processing, methylated by PrmC. Methylation increases the termination efficiency of RF1.

Its subcellular location is the cytoplasm. Functionally, peptide chain release factor 1 directs the termination of translation in response to the peptide chain termination codons UAG and UAA. In Acholeplasma laidlawii (strain PG-8A), this protein is Peptide chain release factor 1.